Reading from the N-terminus, the 661-residue chain is Polyadenylate-binding protein, cytoplasmic and nuclear (661 aa).

Residues 1 to 11 (MSAAETNQVQE) are compositionally biased toward polar residues. The interval 1–61 (MSAAETNQVQ…SAEEQGESSG (61 aa)) is disordered. Over residues 20–51 (SSSSPAAGGATTATTTNNAESSDATSSSVPAD) the composition is skewed to low complexity. 4 consecutive RRM domains span residues 67–145 (ASLY…WSQR), 155–232 (GNIF…KHVS), 248–325 (TNIY…RAQK), and 351–428 (VNLF…LAQR). A disordered region spans residues 473-563 (FPPNGRGNAP…PNRPAGGNVP (91 aa)). A compositionally biased stretch (pro residues) spans 501 to 511 (EQWPRPGPNGQ). The segment covering 523 to 532 (QDFNGQNMRP) has biased composition (polar residues). Low complexity predominate over residues 533–549 (QQQQQQQQQQQQQQQQQ). The PABC domain maps to 563-644 (PAKDLAALIA…ALNAFEEYKN (82 aa)).

This sequence belongs to the polyadenylate-binding protein type-1 family.

The protein localises to the cytoplasm. It localises to the nucleus. Binds the poly(A) tail of mRNA. Appears to be an important mediator of the multiple roles of the poly(A) tail in mRNA biogenesis, stability and translation. In the nucleus, involved in both mRNA cleavage and polyadenylation. Is also required for efficient mRNA export to the cytoplasm. Acts in concert with a poly(A)-specific nuclease (PAN) to affect poly(A) tail shortening, which may occur concomitantly with either nucleocytoplasmic mRNA transport or translational initiation. In the cytoplasm, stimulates translation initiation and regulates mRNA decay through translation termination-coupled poly(A) shortening, probably mediated by PAN. In Lodderomyces elongisporus (strain ATCC 11503 / CBS 2605 / JCM 1781 / NBRC 1676 / NRRL YB-4239) (Yeast), this protein is Polyadenylate-binding protein, cytoplasmic and nuclear (PAB1).